Reading from the N-terminus, the 314-residue chain is Mitochondrial 2-oxoglutarate/malate carrier protein (314 aa).

Ala-2 carries the N-acetylalanine modification. Ser-6 carries the post-translational modification Phosphoserine. 3 Solcar repeats span residues 23–108, 117–208, and 217–306; these read VKFL…LFER, PGFL…SKQF, and DNIL…MNKA. The helical transmembrane segment at 24–42 threads the bilayer; that stretch reads KFLFGGLAGMGATVFVQPL. Lys-57 bears the N6-succinyllysine mark. Residue Lys-73 is modified to N6-acetyllysine. The chain crosses the membrane as a helical span at residues 83–101; sequence GLSAGLLRQATYTTTRLGI. A Phosphotyrosine modification is found at Tyr-102. Helical transmembrane passes span 119-140, 183-202, and 222-240; these read FLLK…GTPA, GCIP…LASY, and HFCA…SMPV. Lys-256 carries the post-translational modification N6-acetyllysine. A helical membrane pass occupies residues 281–300; that stretch reads GFTPYYARLGPHTVLTFIFL.

It belongs to the mitochondrial carrier (TC 2.A.29) family. In terms of assembly, interacts with SMIM26.

The protein localises to the mitochondrion inner membrane. It catalyses the reaction (S)-malate(in) + 2-oxoglutarate(out) = (S)-malate(out) + 2-oxoglutarate(in). The catalysed reaction is malonate(in) + 2-oxoglutarate(out) = malonate(out) + 2-oxoglutarate(in). It carries out the reaction succinate(in) + 2-oxoglutarate(out) = succinate(out) + 2-oxoglutarate(in). The enzyme catalyses maleate(in) + 2-oxoglutarate(out) = maleate(out) + 2-oxoglutarate(in). It catalyses the reaction oxaloacetate(in) + 2-oxoglutarate(out) = oxaloacetate(out) + 2-oxoglutarate(in). In terms of biological role, catalyzes the transport of 2-oxoglutarate (alpha-oxoglutarate) across the inner mitochondrial membrane in an electroneutral exchange for malate. Can also exchange 2-oxoglutarate for other dicarboxylic acids such as malonate, succinate, maleate and oxaloacetate, although with lower affinity. Contributes to several metabolic processes, including the malate-aspartate shuttle, the oxoglutarate/isocitrate shuttle, in gluconeogenesis from lactate, and in nitrogen metabolism. Maintains mitochondrial fusion and fission events, and the organization and morphology of cristae. Involved in the regulation of apoptosis. Helps protect from cytotoxic-induced apoptosis by modulating glutathione levels in mitochondria. The sequence is that of Mitochondrial 2-oxoglutarate/malate carrier protein (Slc25a11) from Mus musculus (Mouse).